Here is a 250-residue protein sequence, read N- to C-terminus: 1-(5-phosphoribosyl)-5-[(5-phosphoribosylamino)methylideneamino] imidazole-4-carboxamide isomerase (250 aa).

Asp8 (proton acceptor) is an active-site residue. Asp129 acts as the Proton donor in catalysis.

It belongs to the HisA/HisF family.

It localises to the cytoplasm. The catalysed reaction is 1-(5-phospho-beta-D-ribosyl)-5-[(5-phospho-beta-D-ribosylamino)methylideneamino]imidazole-4-carboxamide = 5-[(5-phospho-1-deoxy-D-ribulos-1-ylimino)methylamino]-1-(5-phospho-beta-D-ribosyl)imidazole-4-carboxamide. It participates in amino-acid biosynthesis; L-histidine biosynthesis; L-histidine from 5-phospho-alpha-D-ribose 1-diphosphate: step 4/9. The sequence is that of 1-(5-phosphoribosyl)-5-[(5-phosphoribosylamino)methylideneamino] imidazole-4-carboxamide isomerase from Desulfatibacillum aliphaticivorans.